The sequence spans 1088 residues: Ran-binding protein 17 (1088 aa).

Alanine 2 bears the N-acetylalanine mark. Phosphoserine is present on serine 569.

The protein belongs to the exportin family. In terms of assembly, binds to nucleoporins and the GTP-bound form of Ran. In terms of tissue distribution, highly expressed in testis, moderately in pancreas and weakly in other tissues studied.

Its subcellular location is the cytoplasm. It localises to the nucleus. The protein resides in the nuclear pore complex. In terms of biological role, may function as a nuclear transport receptor. The chain is Ran-binding protein 17 (RANBP17) from Homo sapiens (Human).